A 337-amino-acid polypeptide reads, in one-letter code: DNA-directed RNA polymerase subunit alpha (337 aa).

Residues methionine 1–lysine 233 are alpha N-terminal domain (alpha-NTD). The interval phenylalanine 249–tyrosine 337 is alpha C-terminal domain (alpha-CTD).

Belongs to the RNA polymerase alpha chain family. As to quaternary structure, homodimer. The RNAP catalytic core consists of 2 alpha, 1 beta, 1 beta' and 1 omega subunit. When a sigma factor is associated with the core the holoenzyme is formed, which can initiate transcription.

It carries out the reaction RNA(n) + a ribonucleoside 5'-triphosphate = RNA(n+1) + diphosphate. Its function is as follows. DNA-dependent RNA polymerase catalyzes the transcription of DNA into RNA using the four ribonucleoside triphosphates as substrates. The polypeptide is DNA-directed RNA polymerase subunit alpha (Bartonella henselae (strain ATCC 49882 / DSM 28221 / CCUG 30454 / Houston 1) (Rochalimaea henselae)).